A 400-amino-acid polypeptide reads, in one-letter code: MPFVKGFEPISLRDTNLFEPIKIGNTQLAHRAVMPPLTRMRATHPGNIPNKEWAAVYYGQRAQRPGTMIITEGTFISPQAGGYDNAPGIWSDEQVAEWKNIFLAIHDCQSFAWVQLWSLGWASFPDVLARDGLRYDCASDRVYMNATLQEKAKDANNLEHSLTKDDIKQYIKDYIHAAKNSIAAGADGVEIHSANGYLLNQFLDPHSNKRTDEYGGTIENRARFTLEVVDALIETIGPERVGLRLSPYGTFNSMSGGAEPGIIAQYSYVLGELEKRAKAGKRLAFVHLVEPRVTDPSLVEGEGEYSEGTNDFAYSIWKGPIIRAGNYALHPEVVREQVKDPRTLIGYGRFFISNPDLVYRLEEGLPLNKYDRSTFYTMSAEGYTDYPTYEEAVDLGWNKN.

The FMN site is built by T38 and Q115. The substrate site is built by H192 and N195. Y197 (proton donor) is an active-site residue. FMN contacts are provided by R244 and R349. Position 376 (Y376) interacts with substrate.

Homodimer or heterodimer with OYE2. FMN serves as cofactor.

The catalysed reaction is A + NADPH + H(+) = AH2 + NADP(+). Functionally, flavin-dependent enoate reductase that catalyzes the chemo- and stereoslective hydrogenation of electron-poor alkenes. The enzyme is reduced by NADPH, and oxygen, quinones, and alpha,beta-unsaturated aldehydes and ketones can act as electron acceptors to complete catalytic turnover. The physiological oxidant remains elusive. Has a prooxidant activity, increasing reactive oxygen species (ROS) levels when overexpressed. Formation of OYE2-OYE3 heterodimers contribute to the induction of programmed cell death upon oxidative stress. The polypeptide is NADPH dehydrogenase 3 (Saccharomyces cerevisiae (strain ATCC 204508 / S288c) (Baker's yeast)).